Reading from the N-terminus, the 120-residue chain is NAD(P)H-quinone oxidoreductase subunit 3 (120 aa).

3 helical membrane-spanning segments follow: residues 2-22 (FVLT…LVPV), 64-84 (MFAL…PWAV), and 89-109 (LGLL…VALV).

This sequence belongs to the complex I subunit 3 family. NDH-1 can be composed of about 15 different subunits; different subcomplexes with different compositions have been identified which probably have different functions.

It is found in the cellular thylakoid membrane. It catalyses the reaction a plastoquinone + NADH + (n+1) H(+)(in) = a plastoquinol + NAD(+) + n H(+)(out). The catalysed reaction is a plastoquinone + NADPH + (n+1) H(+)(in) = a plastoquinol + NADP(+) + n H(+)(out). Its function is as follows. NDH-1 shuttles electrons from an unknown electron donor, via FMN and iron-sulfur (Fe-S) centers, to quinones in the respiratory and/or the photosynthetic chain. The immediate electron acceptor for the enzyme in this species is believed to be plastoquinone. Couples the redox reaction to proton translocation, and thus conserves the redox energy in a proton gradient. Cyanobacterial NDH-1 also plays a role in inorganic carbon-concentration. The chain is NAD(P)H-quinone oxidoreductase subunit 3 (ndhC) from Synechocystis sp. (strain ATCC 27184 / PCC 6803 / Kazusa).